The primary structure comprises 397 residues: Lysophospholipid transporter LplT (397 aa).

At Met-1–Lys-17 the chain is on the periplasmic side. The helical transmembrane segment at Ala-18–Leu-38 threads the bilayer. At Ala-39 to Pro-52 the chain is on the cytoplasmic side. The helical transmembrane segment at Val-53–Ala-73 threads the bilayer. Residues Asp-74–Leu-90 lie on the Periplasmic side of the membrane. The chain crosses the membrane as a helical span at residues Leu-91 to Ile-111. At Gly-112–Thr-144 the chain is on the cytoplasmic side. A helical transmembrane segment spans residues Ile-145–Val-165. Residue Ala-166 is a topological domain, periplasmic. The helical transmembrane segment at Leu-167–Leu-187 threads the bilayer. Residues Ala-188–Ser-226 lie on the Cytoplasmic side of the membrane. Residues Leu-227–Leu-247 form a helical membrane-spanning segment. Topologically, residues Gly-248–Thr-256 are periplasmic. Residues Tyr-257–Val-277 traverse the membrane as a helical segment. Residues Thr-278–Glu-280 lie on the Cytoplasmic side of the membrane. A helical transmembrane segment spans residues Thr-281–Leu-301. At Gln-302–Glu-304 the chain is on the periplasmic side. The helical transmembrane segment at Leu-305–Pro-325 threads the bilayer. At Leu-326–Ala-343 the chain is on the cytoplasmic side. A helical transmembrane segment spans residues Ile-344–Leu-364. Residues Ala-365–Val-366 lie on the Periplasmic side of the membrane. A helical membrane pass occupies residues Leu-367–Ile-387. Residues Thr-388–His-397 lie on the Cytoplasmic side of the membrane.

This sequence belongs to the major facilitator superfamily. LplT (TC 2.A.1.42) family.

The protein localises to the cell inner membrane. Functionally, catalyzes the facilitated diffusion of 2-acyl-glycero-3-phosphoethanolamine (2-acyl-GPE) into the cell. The chain is Lysophospholipid transporter LplT from Escherichia fergusonii (strain ATCC 35469 / DSM 13698 / CCUG 18766 / IAM 14443 / JCM 21226 / LMG 7866 / NBRC 102419 / NCTC 12128 / CDC 0568-73).